The following is a 207-amino-acid chain: Large ribosomal subunit protein uL4 (207 aa).

Residues 48 to 70 (KAQKTRSEVSGGGAKPWRQKGTG) are disordered.

This sequence belongs to the universal ribosomal protein uL4 family. In terms of assembly, part of the 50S ribosomal subunit.

Functionally, one of the primary rRNA binding proteins, this protein initially binds near the 5'-end of the 23S rRNA. It is important during the early stages of 50S assembly. It makes multiple contacts with different domains of the 23S rRNA in the assembled 50S subunit and ribosome. Its function is as follows. Forms part of the polypeptide exit tunnel. This Francisella philomiragia subsp. philomiragia (strain ATCC 25017 / CCUG 19701 / FSC 153 / O#319-036) protein is Large ribosomal subunit protein uL4.